The sequence spans 63 residues: MRCLPVFVILLLLIASTPSDTVPLKTKDDMPQASFHGNARRTLQMLSKKQCCWYFDISCCLWP.

The signal sequence occupies residues 1–19 (MRCLPVFVILLLLIASTPS). Residues 20–47 (DTVPLKTKDDMPQASFHGNARRTLQMLS) constitute a propeptide that is removed on maturation. Glutamine 50 carries the pyrrolidone carboxylic acid modification.

This sequence belongs to the conotoxin T superfamily. In terms of processing, contains 2 disulfide bonds that can be either 'C1-C3, C2-C4' or 'C1-C4, C2-C3', since these disulfide connectivities have been observed for conotoxins with cysteine framework V (for examples, see AC P0DQQ7 and AC P81755). Expressed by the venom duct.

The protein resides in the secreted. The polypeptide is Conotoxin TxMRCL-D012 (Conus textile (Cloth-of-gold cone)).